The sequence spans 278 residues: MSIRKTGIVFQRFGKQFKVFVENQTLVAFAQKKLQWKRDFKLLVGDKVTLENGVIVAVEERKNTLVRPKVVNVDQVVIVQSLIEPKINWQQLFKLLIHFHAQNVARLVLVITKNDLEFEPAEKARLSELTSFGYQLFFTAPNADLPLTLFTELQNRFSVFMGQSGVGKSSLINRLDSQIHQAIQALSAHQFGKNTTTSTVMFPFQNGFICDTPGFNVIDFPNLKQLAAQHFVGFASLIGQCHFSNCTHQSEKGCFIVSAVTQKSYSLWLYESYLKLIN.

The CP-type G domain occupies 62 to 218; the sequence is KNTLVRPKVV…ICDTPGFNVI (157 aa). GTP contacts are provided by residues 112 to 115 and 162 to 170; these read TKND and GQSGVGKSS. The Zn(2+) site is built by cysteine 241, cysteine 246, histidine 248, and cysteine 254.

The protein belongs to the TRAFAC class YlqF/YawG GTPase family. RsgA subfamily. In terms of assembly, monomer. Associates with 30S ribosomal subunit, binds 16S rRNA. Requires Zn(2+) as cofactor.

The protein localises to the cytoplasm. Its function is as follows. One of several proteins that assist in the late maturation steps of the functional core of the 30S ribosomal subunit. Helps release RbfA from mature subunits. May play a role in the assembly of ribosomal proteins into the subunit. Circularly permuted GTPase that catalyzes slow GTP hydrolysis, GTPase activity is stimulated by the 30S ribosomal subunit. The sequence is that of Small ribosomal subunit biogenesis GTPase RsgA from Mycoplasma pneumoniae (strain ATCC 29342 / M129 / Subtype 1) (Mycoplasmoides pneumoniae).